The sequence spans 593 residues: A-type ATP synthase subunit A (593 aa).

Glycine 236–threonine 243 lines the ATP pocket.

Belongs to the ATPase alpha/beta chains family. As to quaternary structure, has multiple subunits with at least A(3), B(3), C, D, E, F, H, I and proteolipid K(x).

Its subcellular location is the cell membrane. The enzyme catalyses ATP + H2O + 4 H(+)(in) = ADP + phosphate + 5 H(+)(out). Functionally, produces ATP from ADP in the presence of a proton gradient across the membrane. The archaeal alpha chain is a catalytic subunit. Its function is as follows. Component of the A-type ATP synthase that produces ATP from ADP in the presence of a proton gradient across the membrane. The A chain is the catalytic subunit. In Pyrobaculum aerophilum (strain ATCC 51768 / DSM 7523 / JCM 9630 / CIP 104966 / NBRC 100827 / IM2), this protein is A-type ATP synthase subunit A.